The sequence spans 310 residues: Small ribosomal subunit biogenesis GTPase RsgA (310 aa).

The 162-residue stretch at 77–238 folds into the CP-type G domain; sequence LSKQSHILAA…IIDTPGIKGF (162 aa). GTP contacts are provided by residues 126–129 and 180–188; these read NKVD and GHSGVGKST. Positions 262, 267, 269, and 275 each coordinate Zn(2+).

This sequence belongs to the TRAFAC class YlqF/YawG GTPase family. RsgA subfamily. Monomer. Associates with 30S ribosomal subunit, binds 16S rRNA. The cofactor is Zn(2+).

Its subcellular location is the cytoplasm. One of several proteins that assist in the late maturation steps of the functional core of the 30S ribosomal subunit. Helps release RbfA from mature subunits. May play a role in the assembly of ribosomal proteins into the subunit. Circularly permuted GTPase that catalyzes slow GTP hydrolysis, GTPase activity is stimulated by the 30S ribosomal subunit. The chain is Small ribosomal subunit biogenesis GTPase RsgA from Bacteroides fragilis (strain ATCC 25285 / DSM 2151 / CCUG 4856 / JCM 11019 / LMG 10263 / NCTC 9343 / Onslow / VPI 2553 / EN-2).